Consider the following 546-residue polypeptide: Probable protein kinase UbiB (546 aa).

A Protein kinase domain is found at 124 to 502 (DFEIKPLASA…HVRQGQSRYF (379 aa)). ATP is bound by residues 130-138 (LASASIAQV) and Lys153. The active-site Proton acceptor is Asp288. 2 helical membrane passes run 501–521 (YFLG…VSRP) and 522–542 (EWGL…FVGW).

It belongs to the ABC1 family. UbiB subfamily.

The protein localises to the cell inner membrane. It participates in cofactor biosynthesis; ubiquinone biosynthesis [regulation]. In terms of biological role, is probably a protein kinase regulator of UbiI activity which is involved in aerobic coenzyme Q (ubiquinone) biosynthesis. This chain is Probable protein kinase UbiB, found in Escherichia coli O45:K1 (strain S88 / ExPEC).